Here is a 393-residue protein sequence, read N- to C-terminus: NAD(P)H-quinone oxidoreductase subunit H, chloroplastic (393 aa).

This sequence belongs to the complex I 49 kDa subunit family. As to quaternary structure, NDH is composed of at least 16 different subunits, 5 of which are encoded in the nucleus.

The protein localises to the plastid. It localises to the chloroplast thylakoid membrane. It carries out the reaction a plastoquinone + NADH + (n+1) H(+)(in) = a plastoquinol + NAD(+) + n H(+)(out). The enzyme catalyses a plastoquinone + NADPH + (n+1) H(+)(in) = a plastoquinol + NADP(+) + n H(+)(out). Its function is as follows. NDH shuttles electrons from NAD(P)H:plastoquinone, via FMN and iron-sulfur (Fe-S) centers, to quinones in the photosynthetic chain and possibly in a chloroplast respiratory chain. The immediate electron acceptor for the enzyme in this species is believed to be plastoquinone. Couples the redox reaction to proton translocation, and thus conserves the redox energy in a proton gradient. The sequence is that of NAD(P)H-quinone oxidoreductase subunit H, chloroplastic from Chlorokybus atmophyticus (Soil alga).